The sequence spans 176 residues: Ribosome maturation factor RimM (176 aa).

The 80-residue stretch at 97–176 (EDDFYWRDLI…QICVDWDPGF (80 aa)) folds into the PRC barrel domain.

It belongs to the RimM family. Binds ribosomal protein uS19.

The protein localises to the cytoplasm. Its function is as follows. An accessory protein needed during the final step in the assembly of 30S ribosomal subunit, possibly for assembly of the head region. Essential for efficient processing of 16S rRNA. May be needed both before and after RbfA during the maturation of 16S rRNA. It has affinity for free ribosomal 30S subunits but not for 70S ribosomes. This Colwellia psychrerythraea (strain 34H / ATCC BAA-681) (Vibrio psychroerythus) protein is Ribosome maturation factor RimM.